The primary structure comprises 61 residues: Probable tautomerase BH3814 (61 aa).

Pro2 functions as the Proton acceptor; via imino nitrogen in the catalytic mechanism.

This sequence belongs to the 4-oxalocrotonate tautomerase family.

In Halalkalibacterium halodurans (strain ATCC BAA-125 / DSM 18197 / FERM 7344 / JCM 9153 / C-125) (Bacillus halodurans), this protein is Probable tautomerase BH3814.